A 136-amino-acid chain; its full sequence is Histone H3.2 (136 aa).

The segment at 1 to 20 is disordered; sequence MARTKQTARKSTGGKAPRKQ. Lys-5 bears the N6-methylated lysine mark. An N6-acetyllysine; alternate modification is found at Lys-10. Lys-10 is subject to N6-methylated lysine; alternate. Ser-11 carries the phosphoserine modification. Thr-12 carries the phosphothreonine modification. Residue Lys-15 is modified to N6-acetyllysine. Lys-19 and Lys-24 each carry N6-acetyllysine; alternate. Residues Lys-19 and Lys-24 each carry the N6-methylated lysine; alternate modification. Position 37 is an N6-methylated lysine (Lys-37).

Belongs to the histone H3 family. In terms of assembly, the nucleosome is a histone octamer containing two molecules each of H2A, H2B, H3 and H4 assembled in one H3-H4 heterotetramer and two H2A-H2B heterodimers. The octamer wraps approximately 147 bp of DNA. Post-translationally, acetylation is generally linked to gene activation. Can be acetylated to form H3K9ac, H3K14ac, H3K18ac and H3K23ac. H3K9ac could compete with H3K9me and prevent gene silencing. H3K9ac is restricted to euchromatin. In terms of processing, methylated to form mainly H3K4me, H3K9me, H3K18me, H3K23me and H3K36me. H3K4me1/2/3, H3K9me3 and H3K36me1/2/3 are typical marks for euchromatin, whereas heterochromatic chromocenters are enriched in H3K9me1/2. H2BK143ub1 is probably prerequisite for H3K4me. Can be phosphorylated to form H3S10ph and H3T11ph.

The protein resides in the nucleus. Its subcellular location is the chromosome. In terms of biological role, core component of nucleosome. Nucleosomes wrap and compact DNA into chromatin, limiting DNA accessibility to the cellular machineries which require DNA as a template. Histones thereby play a central role in transcription regulation, DNA repair, DNA replication and chromosomal stability. DNA accessibility is regulated via a complex set of post-translational modifications of histones, also called histone code, and nucleosome remodeling. This chain is Histone H3.2, found in Cichorium intybus (Chicory).